Here is a 76-residue protein sequence, read N- to C-terminus: Putative Fe(2+) transport protein A (76 aa).

The protein belongs to the FeoA family.

Functionally, might be involved in Fe(2+) ion uptake. This chain is Putative Fe(2+) transport protein A, found in Helicobacter pylori (strain ATCC 700392 / 26695) (Campylobacter pylori).